The primary structure comprises 487 residues: L-tartrate/succinate antiporter (487 aa).

A run of 14 helical transmembrane segments spans residues 10–30 (YLAP…AGLE), 33–53 (TWLY…EPVP), 54–74 (GAVV…WLLF), 93–113 (WAVS…FMFG), 137–157 (TLFL…VTPS), 189–209 (IGSY…AIFL), 236–256 (FLGM…LAYV), 292–312 (LMVG…AAMV), 313–333 (GYSV…DIVS), 340–360 (VFFW…TGFI), 370–390 (SLSG…FYLL), 393–413 (FFAS…AAAL), 418–438 (IPLP…SILT), and 465–485 (IFGL…MPVV).

This sequence belongs to the SLC13A/DASS transporter (TC 2.A.47) family. DIT1 subfamily.

Its subcellular location is the cell inner membrane. The catalysed reaction is (2R,3R)-tartrate(out) + succinate(in) = (2R,3R)-tartrate(in) + succinate(out). Catalyzes the uptake of tartrate in exchange for intracellular succinate. Essential for anaerobic L-tartrate fermentation. In Shigella flexneri, this protein is L-tartrate/succinate antiporter (ttdT).